The following is a 1475-amino-acid chain: ABC transporter G family member 15 (1475 aa).

The span at 1-10 (MDSNENKKNG) shows a compositional bias: basic and acidic residues. Disordered regions lie at residues 1-40 (MDSNENKKNGGDSLELNIINNNNDNNNNNDNNNNSTEEHI) and 75-94 (NIKNDIEAPPSGEFEPGGGA). Over residues 17–34 (NIINNNNDNNNNNDNNNN) the composition is skewed to low complexity. The stretch at 25-67 (NNNNNDNNNNSTEEHIESVEQSIKEFNNVANELETEFRDYLVE) forms a coiled coil. The ABC transporter 1 domain occupies 155–404 (LNVKNWFKKS…FIDMGFECEP (250 aa)). The 247-residue stretch at 507–753 (WGDKFSLISR…FTGERYLEKS (247 aa)) folds into the ABC transmembrane type-2 1 domain. The next 5 helical transmembrane spans lie at 596–616 (IPIIMIQVFLFSIVTYFMFGL), 623–641 (FFINCFTLIGFTLATNNLY), 653–673 (IGQNIMNVLFLTMMTFTSYII), 680–699 (VWFGWYHYCNPFSFAFRALM), and 770–790 (ICIVYGFWILFIICNCIVLNI). The region spanning 842–1087 (FTWQHMYYSV…LTSYFQRHGV (246 aa)) is the ABC transporter 2 domain. 879–886 (GSSGAGKT) serves as a coordination point for ATP. Transmembrane regions (helical) follow at residues 1180–1200 (GYSYGTFIQSALVGLINGWTF), 1216–1236 (FIFNVTMLGILLMFLVLPQFI), 1256–1276 (FALSIIVVELPFVLVSGTIFF), 1293–1313 (FFFWLIFMLFLFYCVGFGQAI), 1323–1343 (ALNLLPVLIIFLFLFCGVLVI), and 1449–1469 (FGIIAGYFVLNIFLVVLFVFL). An ABC transmembrane type-2 2 domain is found at 1180-1404 (GYSYGTFIQS…TCSDYAFEFL (225 aa)).

The protein belongs to the ABC transporter superfamily. ABCG family. PDR (TC 3.A.1.205) subfamily.

The protein resides in the membrane. In Dictyostelium discoideum (Social amoeba), this protein is ABC transporter G family member 15 (abcG15).